The chain runs to 279 residues: Large ribosomal subunit protein uL2 (279 aa).

The tract at residues glycine 222–lysine 279 is disordered. Over residues methionine 232–glycine 242 the composition is skewed to gly residues. Positions leucine 259 to serine 268 are enriched in basic residues.

This sequence belongs to the universal ribosomal protein uL2 family. In terms of assembly, part of the 50S ribosomal subunit. Forms a bridge to the 30S subunit in the 70S ribosome.

One of the primary rRNA binding proteins. Required for association of the 30S and 50S subunits to form the 70S ribosome, for tRNA binding and peptide bond formation. It has been suggested to have peptidyltransferase activity; this is somewhat controversial. Makes several contacts with the 16S rRNA in the 70S ribosome. This chain is Large ribosomal subunit protein uL2, found in Chlorobium phaeobacteroides (strain DSM 266 / SMG 266 / 2430).